Consider the following 175-residue polypeptide: EKC/KEOPS complex subunit TPRKB (175 aa).

The protein belongs to the CGI121/TPRKB family. As to quaternary structure, component of the EKC/KEOPS complex.

It is found in the cytoplasm. The protein localises to the cytosol. It localises to the nucleus. Functionally, component of the EKC/KEOPS complex that is required for the formation of a threonylcarbamoyl group on adenosine at position 37 (t(6)A37) in tRNAs that read codons beginning with adenine. The complex is probably involved in the transfer of the threonylcarbamoyl moiety of threonylcarbamoyl-AMP (TC-AMP) to the N6 group of A37. Tprkb acts as an allosteric effector that regulates the t(6)A activity of the complex. The chain is EKC/KEOPS complex subunit TPRKB from Danio rerio (Zebrafish).